We begin with the raw amino-acid sequence, 73 residues long: U-scoloptoxin(03)-Ssd1b (73 aa).

A signal peptide spans 1-23 (MKSSMAVLLVMGLIIFTLDKCYS).

Contains 3 disulfide bonds. Expressed by the venom gland.

The protein resides in the secreted. The protein is U-scoloptoxin(03)-Ssd1b of Scolopendra dehaani (Thai centipede).